The chain runs to 231 residues: UPF0758 protein YsxA (231 aa).

Residues 109–231 enclose the MPN domain; the sequence is VIRSPEDGAN…FVSLKEKGYL (123 aa). Positions 180, 182, and 193 each coordinate Zn(2+). A JAMM motif motif is present at residues 180-193; the sequence is HNHPSGDPTPSRED.

Belongs to the UPF0758 family.

This is UPF0758 protein YsxA (ysxA) from Bacillus subtilis (strain 168).